The sequence spans 737 residues: Catalase-peroxidase (737 aa).

Positions 102–225 (WHSAGTYRTG…LGAVQMGLIY (124 aa)) form a cross-link, tryptophyl-tyrosyl-methioninium (Trp-Tyr) (with M-251). The active-site Proton acceptor is His103. The tryptophyl-tyrosyl-methioninium (Tyr-Met) (with W-102) cross-link spans 225 to 251 (YVNPEGPNGKPDPLAAAHDIRETFARM). His266 serves as a coordination point for heme b.

Belongs to the peroxidase family. Peroxidase/catalase subfamily. In terms of assembly, homodimer or homotetramer. Requires heme b as cofactor. Post-translationally, formation of the three residue Trp-Tyr-Met cross-link is important for the catalase, but not the peroxidase activity of the enzyme.

It carries out the reaction H2O2 + AH2 = A + 2 H2O. The enzyme catalyses 2 H2O2 = O2 + 2 H2O. In terms of biological role, bifunctional enzyme with both catalase and broad-spectrum peroxidase activity. This Caulobacter sp. (strain K31) protein is Catalase-peroxidase.